The following is a 209-amino-acid chain: Chaperone protein TorD (209 aa).

Belongs to the TorD/DmsD family. TorD subfamily.

The protein resides in the cytoplasm. Functionally, involved in the biogenesis of TorA. Acts on TorA before the insertion of the molybdenum cofactor and, as a result, probably favors a conformation of the apoenzyme that is competent for acquiring the cofactor. In Salmonella bongori (strain ATCC 43975 / DSM 13772 / NCTC 12419), this protein is Chaperone protein TorD.